The primary structure comprises 398 residues: Histidinol dehydrogenase (398 aa).

NAD(+) is bound by residues tyrosine 114, glutamine 176, and asparagine 199. 3 residues coordinate substrate: threonine 222, glutamine 244, and histidine 247. Positions 244 and 247 each coordinate Zn(2+). Catalysis depends on proton acceptor residues glutamate 298 and histidine 299. The substrate site is built by histidine 299, aspartate 331, glutamate 384, and histidine 389. Residue aspartate 331 participates in Zn(2+) binding. Histidine 389 contributes to the Zn(2+) binding site.

Belongs to the histidinol dehydrogenase family. Zn(2+) serves as cofactor.

It carries out the reaction L-histidinol + 2 NAD(+) + H2O = L-histidine + 2 NADH + 3 H(+). It functions in the pathway amino-acid biosynthesis; L-histidine biosynthesis; L-histidine from 5-phospho-alpha-D-ribose 1-diphosphate: step 9/9. Its function is as follows. Catalyzes the sequential NAD-dependent oxidations of L-histidinol to L-histidinaldehyde and then to L-histidine. The chain is Histidinol dehydrogenase (hisD) from Saccharolobus solfataricus (strain ATCC 35092 / DSM 1617 / JCM 11322 / P2) (Sulfolobus solfataricus).